We begin with the raw amino-acid sequence, 134 residues long: Large ribosomal subunit protein uL22 (134 aa).

It belongs to the universal ribosomal protein uL22 family. In terms of assembly, part of the 50S ribosomal subunit.

In terms of biological role, this protein binds specifically to 23S rRNA; its binding is stimulated by other ribosomal proteins, e.g. L4, L17, and L20. It is important during the early stages of 50S assembly. It makes multiple contacts with different domains of the 23S rRNA in the assembled 50S subunit and ribosome. The globular domain of the protein is located near the polypeptide exit tunnel on the outside of the subunit, while an extended beta-hairpin is found that lines the wall of the exit tunnel in the center of the 70S ribosome. The sequence is that of Large ribosomal subunit protein uL22 from Karelsulcia muelleri (strain GWSS) (Sulcia muelleri).